A 138-amino-acid chain; its full sequence is ATP synthase epsilon chain (138 aa).

The protein belongs to the ATPase epsilon chain family. F-type ATPases have 2 components, CF(1) - the catalytic core - and CF(0) - the membrane proton channel. CF(1) has five subunits: alpha(3), beta(3), gamma(1), delta(1), epsilon(1). CF(0) has three main subunits: a, b and c.

Its subcellular location is the cell inner membrane. In terms of biological role, produces ATP from ADP in the presence of a proton gradient across the membrane. The polypeptide is ATP synthase epsilon chain (Psychrobacter sp. (strain PRwf-1)).